The following is a 145-amino-acid chain: D-aminoacyl-tRNA deacylase (145 aa).

The short motif at 137–138 (GP) is the Gly-cisPro motif, important for rejection of L-amino acids element.

This sequence belongs to the DTD family. In terms of assembly, homodimer.

The protein resides in the cytoplasm. The enzyme catalyses glycyl-tRNA(Ala) + H2O = tRNA(Ala) + glycine + H(+). It catalyses the reaction a D-aminoacyl-tRNA + H2O = a tRNA + a D-alpha-amino acid + H(+). Functionally, an aminoacyl-tRNA editing enzyme that deacylates mischarged D-aminoacyl-tRNAs. Also deacylates mischarged glycyl-tRNA(Ala), protecting cells against glycine mischarging by AlaRS. Acts via tRNA-based rather than protein-based catalysis; rejects L-amino acids rather than detecting D-amino acids in the active site. By recycling D-aminoacyl-tRNA to D-amino acids and free tRNA molecules, this enzyme counteracts the toxicity associated with the formation of D-aminoacyl-tRNA entities in vivo and helps enforce protein L-homochirality. The sequence is that of D-aminoacyl-tRNA deacylase from Shewanella denitrificans (strain OS217 / ATCC BAA-1090 / DSM 15013).